Consider the following 148-residue polypeptide: Augurin (148 aa).

The first 31 residues, 1-31 (MSTSSARPAVLALAGLALLLLLCLGPDGISG), serve as a signal peptide directing secretion. Propeptides lie at residues 32–70 (NKLK…RAKR) and 133–148 (SRES…YNDY).

It belongs to the augurin family. As to expression, expressed in the intermediate lobe of pituitary, glomerular layer of adrenal cortex, choroid plexus and atrioventricular node of the heart. Expressed in the brain with high expression in the choroid plexus and the epithelial lining of the central canal and expression in the gray matter of the spinal cord (at protein level).

The protein resides in the secreted. It is found in the cytoplasm. It localises to the apical cell membrane. Functionally, probable hormone that may attenuate cell proliferation and induce senescence of oligodendrocyte and neural precursor cells in the central nervous system. ECRG4-induced senescence is characterized by G1 arrest, RB1 dephosphorylation and accelerated CCND1 and CCND3 proteasomal degradation. The protein is Augurin of Mus musculus (Mouse).